The primary structure comprises 120 residues: NAD(P)H-quinone oxidoreductase subunit 3, chloroplastic (120 aa).

3 helical membrane passes run 9–29 (IFWA…IISG), 64–84 (MFAL…PWAV), and 88–108 (VLGV…VVGS).

This sequence belongs to the complex I subunit 3 family. NDH is composed of at least 16 different subunits, 5 of which are encoded in the nucleus.

The protein resides in the plastid. The protein localises to the chloroplast thylakoid membrane. It carries out the reaction a plastoquinone + NADH + (n+1) H(+)(in) = a plastoquinol + NAD(+) + n H(+)(out). The enzyme catalyses a plastoquinone + NADPH + (n+1) H(+)(in) = a plastoquinol + NADP(+) + n H(+)(out). Functionally, NDH shuttles electrons from NAD(P)H:plastoquinone, via FMN and iron-sulfur (Fe-S) centers, to quinones in the photosynthetic chain and possibly in a chloroplast respiratory chain. The immediate electron acceptor for the enzyme in this species is believed to be plastoquinone. Couples the redox reaction to proton translocation, and thus conserves the redox energy in a proton gradient. The polypeptide is NAD(P)H-quinone oxidoreductase subunit 3, chloroplastic (Nuphar advena (Common spatterdock)).